Consider the following 478-residue polypeptide: Pyruvate kinase (478 aa).

Arg36 provides a ligand contact to substrate. The K(+) site is built by Asn38, Ser40, and Asp70. Residue 38–41 (NFSH) coordinates ATP. Residues Arg77 and Lys160 each contribute to the ATP site. Glu225 is a Mg(2+) binding site. Substrate is bound by residues Gly251, Asp252, and Thr284. Asp252 provides a ligand contact to Mg(2+).

This sequence belongs to the pyruvate kinase family. In terms of assembly, homotetramer. The cofactor is Mg(2+). It depends on K(+) as a cofactor.

The enzyme catalyses pyruvate + ATP = phosphoenolpyruvate + ADP + H(+). The protein operates within carbohydrate degradation; glycolysis; pyruvate from D-glyceraldehyde 3-phosphate: step 5/5. Allosterically activated by AMP and by several sugar phosphates. Belongs to type II PK. This chain is Pyruvate kinase (pykA), found in Haemophilus influenzae (strain ATCC 51907 / DSM 11121 / KW20 / Rd).